The primary structure comprises 296 residues: MGSIPEFSIRDLMEAGVHLGHKAGRWNPAMAPYIYGVHRYKDIHIIDLRKTAVLLRNALSVLYDVVHRRGRVLFVGTKVQASNVIAEEAARCGQYYVNHRWLGGMLTNWETVSSSIRRLLDFEKLLNDTDAKFTKKELLMFDKKREKLERSLGGIREMGGLPHILFVIDTNKEHIAIQEANKLKIPVVAVLDTNSDPRGVDYPIPGNDDSIRSIDFFCRAVSNTILEAIRSDLMSSGISVAGSVGQAKDGSVVDSGKGKSIAAHKGGGKASKGAAEVVAGGSVVSASGGEDAVVQE.

Positions 246 to 272 (QAKDGSVVDSGKGKSIAAHKGGGKASK) are disordered.

The protein belongs to the universal ribosomal protein uS2 family.

The protein is Small ribosomal subunit protein uS2 of Anaplasma phagocytophilum (strain HZ).